The chain runs to 542 residues: CTP synthase (542 aa).

The tract at residues 1-265 (MARYVFITGG…DSEVLCAFGI (265 aa)) is amidoligase domain. Residue S13 coordinates CTP. Residue S13 participates in UTP binding. 14–19 (SLGKGI) contacts ATP. Position 54 (Y54) interacts with L-glutamine. D71 is an ATP binding site. Residues D71 and E139 each coordinate Mg(2+). Residues 146–148 (DIE), 186–191 (KTKPTQ), and K222 each bind CTP. UTP-binding positions include 186 to 191 (KTKPTQ) and K222. The Glutamine amidotransferase type-1 domain maps to 291 to 541 (TIAVVGKYTG…IEAAVEQSRL (251 aa)). Residue A353 participates in L-glutamine binding. C380 (nucleophile; for glutamine hydrolysis) is an active-site residue. Residues 381 to 384 (FGMQ), E404, and R469 contribute to the L-glutamine site. Catalysis depends on residues H514 and E516.

This sequence belongs to the CTP synthase family. Homotetramer.

It carries out the reaction UTP + L-glutamine + ATP + H2O = CTP + L-glutamate + ADP + phosphate + 2 H(+). It catalyses the reaction L-glutamine + H2O = L-glutamate + NH4(+). The catalysed reaction is UTP + NH4(+) + ATP = CTP + ADP + phosphate + 2 H(+). Its pathway is pyrimidine metabolism; CTP biosynthesis via de novo pathway; CTP from UDP: step 2/2. Allosterically activated by GTP, when glutamine is the substrate; GTP has no effect on the reaction when ammonia is the substrate. The allosteric effector GTP functions by stabilizing the protein conformation that binds the tetrahedral intermediate(s) formed during glutamine hydrolysis. Inhibited by the product CTP, via allosteric rather than competitive inhibition. Functionally, catalyzes the ATP-dependent amination of UTP to CTP with either L-glutamine or ammonia as the source of nitrogen. Regulates intracellular CTP levels through interactions with the four ribonucleotide triphosphates. This Bartonella tribocorum (strain CIP 105476 / IBS 506) protein is CTP synthase.